Consider the following 1338-residue polypeptide: Centrosomal P4.1-associated protein (1338 aa).

The interval 190-211 is disordered; that stretch reads GLSLLPDDQSQKHRSPGNTTTG. Ser-260 and Ser-316 each carry phosphoserine. Residues 319–394 are alpha/beta-tubulin binding; the sequence is VANIEERPIK…FTNAKSKFQK (76 aa). 3 disordered regions span residues 386 to 414, 436 to 479, and 521 to 551; these read TNAKSKFQKGKESKLVTNQSTSEDQPLFK, PILK…QTGK, and QGKDRLPLSTGPASRLAAKSPIRETMKESES. The segment covering 400–409 has biased composition (polar residues); that stretch reads LVTNQSTSED. Ser-540 bears the Phosphoserine mark. Basic and acidic residues predominate over residues 541-550; the sequence is PIRETMKESE. Position 589 is a phosphoserine; by PLK2 (Ser-589). At Ser-595 the chain carries Phosphoserine; by PLK2 and PLK4. Disordered stretches follow at residues 611-789, 845-865, and 1096-1153; these read HRMS…LSLS, VKRGEDLSKSRRSRSPPTSEL, and YLPM…QGEI. Residues 635–650 are compositionally biased toward basic and acidic residues; sequence NRSEDLDHTAREKESE. Positions 679–689 are enriched in polar residues; the sequence is QKSTSENQTEW. The span at 717-764 shows a compositional bias: basic and acidic residues; sequence STEDRERGISSREDSPQVCDDKGPFKDTRTQEDKRRDVDLDLSDKDYS. Ser-759 carries the post-translational modification Phosphoserine. The segment at 895–1338 is interaction with STIL; the sequence is QPPGDNARSQ…EGNVLMDTEL (444 aa). A compositionally biased stretch (acidic residues) spans 1140–1149; sequence YKEEEEDQDI.

Belongs to the TCP10 family. In terms of assembly, forms homodimers. Associates with microtubules plus ends; binds to beta-tubulin subunits exposed on microtubule outer surface at its distal tip; also associates with microtubule lattice. Associated with the gamma-tubulin complex. Interacts with the head domain of EPB41. Interacts with LYST. Interacts with CEP152 (via C-terminus). Interacts with STIL. Forms a complex with STIL and SASS6. Phosphorylation at Ser-589 and Ser-595 by PLK2 is required for procentriole formation and centriole elongation. Phosphorylation by PLK2 oscillates during the cell cycle: it increases at G1/S transition and decreases during the exit from mitosis. Phosphorylation at Ser-595 is also mediated by PLK4 but is not a critical step in PLK4 function in procentriole assembly.

It localises to the cytoplasm. The protein localises to the cytoskeleton. The protein resides in the microtubule organizing center. Its subcellular location is the centrosome. It is found in the centriole. Plays an important role in cell division and centrosome function by participating in centriole duplication. Inhibits microtubule nucleation from the centrosome. Involved in the regulation of slow processive growth of centriolar microtubules. Acts as a microtubule plus-end tracking protein that stabilizes centriolar microtubules and inhibits microtubule polymerization and extension from the distal ends of centrioles. Required for centriole elongation and for STIL-mediated centriole amplification. Required for the recruitment of CEP295 to the proximal end of new-born centrioles at the centriolar microtubule wall during early S phase in a PLK4-dependent manner. May be involved in the control of centriolar-microtubule growth by acting as a regulator of tubulin release. The sequence is that of Centrosomal P4.1-associated protein from Homo sapiens (Human).